The sequence spans 399 residues: Argininosuccinate synthase (399 aa).

12-20 serves as a coordination point for ATP; sequence AFSGGLDTS. An L-citrulline-binding site is contributed by Tyr90. Gly120 serves as a coordination point for ATP. L-aspartate-binding residues include Thr122, Asn126, and Asp127. Asn126 is a binding site for L-citrulline. L-citrulline-binding residues include Arg130, Ser175, Glu260, and Tyr272.

This sequence belongs to the argininosuccinate synthase family. Type 1 subfamily. Homotetramer.

The protein localises to the cytoplasm. The catalysed reaction is L-citrulline + L-aspartate + ATP = 2-(N(omega)-L-arginino)succinate + AMP + diphosphate + H(+). It functions in the pathway amino-acid biosynthesis; L-arginine biosynthesis; L-arginine from L-ornithine and carbamoyl phosphate: step 2/3. The protein is Argininosuccinate synthase of Methanothermobacter thermautotrophicus (strain ATCC 29096 / DSM 1053 / JCM 10044 / NBRC 100330 / Delta H) (Methanobacterium thermoautotrophicum).